A 313-amino-acid chain; its full sequence is Ribosomal RNA small subunit methyltransferase H (313 aa).

Residues 35–37 (GGH), Asp55, Phe79, Asp101, and Gln108 contribute to the S-adenosyl-L-methionine site.

The protein belongs to the methyltransferase superfamily. RsmH family.

The protein localises to the cytoplasm. It catalyses the reaction cytidine(1402) in 16S rRNA + S-adenosyl-L-methionine = N(4)-methylcytidine(1402) in 16S rRNA + S-adenosyl-L-homocysteine + H(+). In terms of biological role, specifically methylates the N4 position of cytidine in position 1402 (C1402) of 16S rRNA. The protein is Ribosomal RNA small subunit methyltransferase H of Shigella flexneri.